The primary structure comprises 146 residues: Ribosomal RNA large subunit methyltransferase H (146 aa).

Residues L60, G93, and 112–117 (MGKMTL) contribute to the S-adenosyl-L-methionine site.

The protein belongs to the RNA methyltransferase RlmH family. In terms of assembly, homodimer.

Its subcellular location is the cytoplasm. The catalysed reaction is pseudouridine(1915) in 23S rRNA + S-adenosyl-L-methionine = N(3)-methylpseudouridine(1915) in 23S rRNA + S-adenosyl-L-homocysteine + H(+). Its function is as follows. Specifically methylates the pseudouridine at position 1915 (m3Psi1915) in 23S rRNA. The polypeptide is Ribosomal RNA large subunit methyltransferase H (Koribacter versatilis (strain Ellin345)).